The sequence spans 235 residues: uncharacterized protein (235 aa).

The disordered stretch occupies residues 1–98; sequence MDTKLSVTGA…NKKNTLHYSK (98 aa). Residues Lys16 and Lys35 each participate in a glycyl lysine isopeptide (Lys-Gly) (interchain with G-Cter in ubiquitin) cross-link. The segment covering 38–50 has biased composition (basic residues); the sequence is NGNKKRNKNRNRN. Residues 51–60 are compositionally biased toward basic and acidic residues; that stretch reads KKTETKEQNE.

This is an uncharacterized protein from Saccharomyces cerevisiae (strain ATCC 204508 / S288c) (Baker's yeast).